Reading from the N-terminus, the 265-residue chain is Nitrogenase iron protein 2 (265 aa).

8-15 (GKGGIGKS) is an ATP binding site. Position 91 (Cys-91) interacts with [4Fe-4S] cluster. Arg-94 bears the ADP-ribosylarginine; by dinitrogenase reductase ADP-ribosyltransferase mark. [4Fe-4S] cluster is bound at residue Cys-126.

It belongs to the NifH/BchL/ChlL family. As to quaternary structure, homodimer. The cofactor is [4Fe-4S] cluster. Post-translationally, the reversible ADP-ribosylation of Arg-94 inactivates the nitrogenase reductase and regulates nitrogenase activity.

The enzyme catalyses N2 + 8 reduced [2Fe-2S]-[ferredoxin] + 16 ATP + 16 H2O = H2 + 8 oxidized [2Fe-2S]-[ferredoxin] + 2 NH4(+) + 16 ADP + 16 phosphate + 6 H(+). In terms of biological role, the key enzymatic reactions in nitrogen fixation are catalyzed by the nitrogenase complex, which has 2 components: the iron protein and the molybdenum-iron protein. In Methanothermobacter thermautotrophicus (strain ATCC 29096 / DSM 1053 / JCM 10044 / NBRC 100330 / Delta H) (Methanobacterium thermoautotrophicum), this protein is Nitrogenase iron protein 2 (nifH2).